Consider the following 1448-residue polypeptide: Glutamate receptor ionotropic, NMDA 2B (1448 aa).

The first 24 residues, 1–24 (MRPTEACCYLKISLIILFYMGCYA), serve as a signal peptide directing secretion. Topologically, residues 25-554 (QKHPNMDIAV…SAFLEPFSAD (530 aa)) are extracellular. A disulfide bridge links Cys81 with Cys316. Zn(2+)-binding residues include His122 and Glu279. Residue Asn336 is glycosylated (N-linked (GlcNAc...) asparagine). 2 disulfides stabilise this stretch: Cys426–Cys453 and Cys433–Cys454. L-glutamate contacts are provided by Thr511 and Arg516. A helical transmembrane segment spans residues 555–573 (VWVMMFVMLLIVSAVAVFV). The Cytoplasmic segment spans residues 574–600 (FEYFSPVGYNRCLADGREPGGPSFTIG). Positions 601–620 (KAIWLLWGLVFNNSVPVQNP) form an intramembrane region, discontinuously helical. The tract at residues 601–620 (KAIWLLWGLVFNNSVPVQNP) is pore-forming. The Cytoplasmic segment spans residues 621–627 (KGTTSKI). Residues 628 to 643 (MVSVWAFFAVIFLASY) form a helical membrane-spanning segment. Residues 644–819 (TANLAAFMIQ…LDIDNMAGVF (176 aa)) are Extracellular-facing. N-linked (GlcNAc...) asparagine glycosylation occurs at Asn685. L-glutamate is bound by residues 687 to 688 (ST) and Asp729. Cys743 and Cys798 are joined by a disulfide. The chain crosses the membrane as a helical span at residues 820–839 (YMLAAAMALSLITFIMEHLF). At 840–1448 (FWQLRHCFMG…EKLSSIESDV (609 aa)) the chain is on the cytoplasmic side. The span at 1254–1265 (APNSKYPQSPNG) shows a compositional bias: polar residues. The tract at residues 1254-1277 (APNSKYPQSPNGKAQKRNRSKLHR) is disordered. Positions 1267-1277 (AQKRNRSKLHR) are enriched in basic residues.

This sequence belongs to the glutamate-gated ion channel (TC 1.A.10.1) family. NR2B/GRIN2B subfamily. In terms of assembly, heterotetramer. Forms heterotetrameric channels composed of two GluN1/zeta subunits (GRIN1), and two identical GluN2/epsilon subunits (GRIN2A, GRIN2B, GRIN2C or GRIN2D) or GluN3 subunits (GRIN3A or GRIN3B) (in vitro). In vivo, the subunit composition may depend on the expression levels of the different subunits. As to expression, detected in oocytes.

The protein resides in the cell membrane. It is found in the postsynaptic cell membrane. It catalyses the reaction Ca(2+)(in) = Ca(2+)(out). The enzyme catalyses Na(+)(in) = Na(+)(out). It carries out the reaction K(+)(in) = K(+)(out). In terms of biological role, component of N-methyl-D-aspartate (NMDA) receptors (NMDARs) that function as heterotetrameric, ligand-gated cation channels with high calcium permeability and voltage-dependent block by Mg(2+). Channel activation requires binding of the neurotransmitter L-glutamate to the GluN2 subunit, glycine binding to the GluN1 subunit, plus membrane depolarization to eliminate channel inhibition by Mg(2+). NMDARs mediate simultaneously the potasium efflux and the influx of calcium and sodium. Each GluN2 subunit confers differential attributes to channel properties, including activation, deactivation and desensitization kinetics, pH sensitivity, Ca2(+) permeability, and binding to allosteric modulators. The polypeptide is Glutamate receptor ionotropic, NMDA 2B (Xenopus laevis (African clawed frog)).